The chain runs to 141 residues: D-aminoacyl-tRNA deacylase (141 aa).

The Gly-cisPro motif, important for rejection of L-amino acids motif lies at 133 to 134 (GP).

It belongs to the DTD family. In terms of assembly, homodimer.

The protein resides in the cytoplasm. The enzyme catalyses glycyl-tRNA(Ala) + H2O = tRNA(Ala) + glycine + H(+). It catalyses the reaction a D-aminoacyl-tRNA + H2O = a tRNA + a D-alpha-amino acid + H(+). Functionally, an aminoacyl-tRNA editing enzyme that deacylates mischarged D-aminoacyl-tRNAs. Also deacylates mischarged glycyl-tRNA(Ala), protecting cells against glycine mischarging by AlaRS. Acts via tRNA-based rather than protein-based catalysis; rejects L-amino acids rather than detecting D-amino acids in the active site. By recycling D-aminoacyl-tRNA to D-amino acids and free tRNA molecules, this enzyme counteracts the toxicity associated with the formation of D-aminoacyl-tRNA entities in vivo and helps enforce protein L-homochirality. This is D-aminoacyl-tRNA deacylase from Thermobifida fusca (strain YX).